The chain runs to 244 residues: ATP synthase subunit a, chloroplastic (244 aa).

5 helical membrane-spanning segments follow: residues 35–55, 92–112, 131–151, 196–216, and 217–237; these read QVLITSWVVIAILLGSAVIAV, VPFIGTMFLFIFVSNWSGALL, INTTVALALLTSVAYFYAGLS, LVVVVLVSLVPSVVPIPVMFL, and GLFTSGIQALIFATLAAAYIG.

It belongs to the ATPase A chain family. F-type ATPases have 2 components, CF(1) - the catalytic core - and CF(0) - the membrane proton channel. CF(1) has five subunits: alpha(3), beta(3), gamma(1), delta(1), epsilon(1). CF(0) has four main subunits: a, b, b' and c.

The protein resides in the plastid. The protein localises to the chloroplast thylakoid membrane. Key component of the proton channel; it plays a direct role in the translocation of protons across the membrane. The chain is ATP synthase subunit a, chloroplastic from Gossypium hirsutum (Upland cotton).